A 588-amino-acid chain; its full sequence is Cryptochrome-1 (588 aa).

The Photolyase/cryptochrome alpha/beta domain maps to 3-132 (VNAVHWFRKG…EVIVRISHTL (130 aa)). Residue Lys-11 forms a Glycyl lysine isopeptide (Lys-Gly) (interchain with G-Cter in ubiquitin) linkage. Positions 50–54 (NRWRF) match the LIR 1 motif. Ser-71 is subject to Phosphoserine; by AMPK. The LIR 2 signature appears at 82-87 (DVFPRL). A Glycyl lysine isopeptide (Lys-Gly) (interchain with G-Cter in ubiquitin) cross-link involves residue Lys-107. The short motif at 151–156 (KRFQTL) is the LIR 3 element. Lys-159 is covalently cross-linked (Glycyl lysine isopeptide (Lys-Gly) (interchain with G-Cter in ubiquitin)). Ser-247 is modified (phosphoserine; by MAPK). Ser-252 is a binding site for FAD. 2 short sequence motifs (LIR) span residues 255 to 260 (LRFGCL) and 271 to 276 (DLYKKV). Ser-280 carries the phosphoserine; by AMPK modification. An LIR 6 motif is present at residues 285-290 (SLYGQL). Gln-289 is an FAD binding site. Residue Lys-329 forms a Glycyl lysine isopeptide (Lys-Gly) (interchain with G-Cter in ubiquitin) linkage. The LIR 7 signature appears at 335 to 339 (TGFPW). His-355 serves as a coordination point for FAD. The segment at 371–470 (WISWEEGMKV…LIGVNYPKPM (100 aa)) is required for inhibition of CLOCK-BMAL1-mediated transcription. The short motif at 379–384 (KVFEEL) is the LIR 8 element. 387 to 389 (DAD) provides a ligand contact to FAD. Short sequence motifs (LIR) lie at residues 395-400 (GSWMWL), 411-416 (HCYCPV), and 430-435 (RRYLPV). An interaction with TIMELESS region spans residues 471–493 (VNHAEASRLNIERMKQIYQQLSR). Lys-485 participates in a covalent cross-link: Glycyl lysine isopeptide (Lys-Gly) (interchain with G-Cter in ubiquitin). Short sequence motifs (LIR) lie at residues 486 to 491 (QIYQQL) and 492 to 497 (SRYRGL). The disordered stretch occupies residues 511 to 588 (GGLMGYAPGE…GPKVQRQSSN (78 aa)). Polar residues predominate over residues 545–568 (DSQQTNPLKQGRSSMGTGLSSGKR). Lys-567 participates in a covalent cross-link: Glycyl lysine isopeptide (Lys-Gly) (interchain with G-Cter in ubiquitin). A Phosphoserine modification is found at Ser-570.

This sequence belongs to the DNA photolyase class-1 family. Component of the circadian core oscillator, which includes the CRY proteins, CLOCK or NPAS2, BMAL1 or BMAL2, CSNK1D and/or CSNK1E, TIMELESS, and the PER proteins. Interacts directly with TIMELESS. Interacts directly with PER1, PER2 and PER3; interaction with PER2 inhibits its ubiquitination and vice versa. Interacts with FBXL21. Interacts with FBXL3. Interacts with CLOCK-BMAL1 independently of PER2 and DNA. Interacts with HDAC1, HDAC2 and SIN3B. Interacts with nuclear receptors AR, NR1D1, NR3C1/GR, RORA and RORC; the interaction with at least NR3C1/GR is ligand dependent. Interacts with PRKDC. Interacts with the G protein subunit alpha GNAS; the interaction may block GPCR-mediated regulation of cAMP concentrations. Interacts with PRMT5. Interacts with EZH2. Interacts with MYBBP1A, DOCK7, HNRNPU, RPL7A, RPL8 and RPS3. Interacts with PPP5C (via TPR repeats). Interacts with MAP1LC3B. Interacts with CLOCK. Interacts with BMAL1. Interacts weakly with HDAC3; this interaction is enhanced in the presence of FBXL3. Interacts with TRIM28, KCTD5 and DDB1. Interacts with FOXO1. Interacts with DTL and DDB1-CUL4A complex. Interacts with HNF4A. Interacts with PSMD2 in a KDM8-dependent manner. Interacts with KDM8 in a FBXL3-dependent manner. Interacts with PPARG in a ligand-dependent manner. Interacts with PPARD (via domain NR LBD) and NR1I2 (via domain NR LBD) in a ligand-dependent manner. Interacts with PPARA, NR1I3 and VDR. Requires FAD as cofactor. (6R)-5,10-methylene-5,6,7,8-tetrahydrofolate is required as a cofactor. In terms of processing, phosphorylation on Ser-247 by MAPK is important for the inhibition of CLOCK-BMAL1-mediated transcriptional activity. Phosphorylation by CSNK1E requires interaction with PER1 or PER2. Phosphorylation at Ser-71 and Ser-280 by AMPK decreases protein stability. Phosphorylation at Ser-570 exhibits a robust circadian rhythm with a peak at CT8, increases protein stability, prevents SCF(FBXL3)-mediated degradation and is antagonized by interaction with PRKDC. Post-translationally, ubiquitinated by the SCF(FBXL3) and SCF(FBXL21) complexes, regulating the balance between degradation and stabilization. The SCF(FBXL3) complex is mainly nuclear and mediates ubiquitination and subsequent degradation of CRY1. In contrast, cytoplasmic SCF(FBXL21) complex-mediated ubiquitination leads to stabilize CRY1 and counteract the activity of the SCF(FBXL3) complex. The SCF(FBXL3) and SCF(FBXL21) complexes probably mediate ubiquitination at different Lys residues. Ubiquitination at Lys-11 and Lys-107 are specifically ubiquitinated by the SCF(FBXL21) complex but not by the SCF(FBXL3) complex. Ubiquitination may be inhibited by PER2. Deubiquitinated by USP7. Undergoes autophagy-mediated degradation in the liver in a time-dependent manner. Autophagic degradation of CRY1 (an inhibitor of gluconeogenesis) occurs during periods of reduced feeding allowing induction of gluconeogenesis and maintenance of blood glucose levels.

Its subcellular location is the cytoplasm. It localises to the nucleus. In terms of biological role, transcriptional repressor which forms a core component of the circadian clock. The circadian clock, an internal time-keeping system, regulates various physiological processes through the generation of approximately 24 hour circadian rhythms in gene expression, which are translated into rhythms in metabolism and behavior. It is derived from the Latin roots 'circa' (about) and 'diem' (day) and acts as an important regulator of a wide array of physiological functions including metabolism, sleep, body temperature, blood pressure, endocrine, immune, cardiovascular, and renal function. Consists of two major components: the central clock, residing in the suprachiasmatic nucleus (SCN) of the brain, and the peripheral clocks that are present in nearly every tissue and organ system. Both the central and peripheral clocks can be reset by environmental cues, also known as Zeitgebers (German for 'timegivers'). The predominant Zeitgeber for the central clock is light, which is sensed by retina and signals directly to the SCN. The central clock entrains the peripheral clocks through neuronal and hormonal signals, body temperature and feeding-related cues, aligning all clocks with the external light/dark cycle. Circadian rhythms allow an organism to achieve temporal homeostasis with its environment at the molecular level by regulating gene expression to create a peak of protein expression once every 24 hours to control when a particular physiological process is most active with respect to the solar day. Transcription and translation of core clock components (CLOCK, NPAS2, BMAL1, BMAL2, PER1, PER2, PER3, CRY1 and CRY2) plays a critical role in rhythm generation, whereas delays imposed by post-translational modifications (PTMs) are important for determining the period (tau) of the rhythms (tau refers to the period of a rhythm and is the length, in time, of one complete cycle). A diurnal rhythm is synchronized with the day/night cycle, while the ultradian and infradian rhythms have a period shorter and longer than 24 hours, respectively. Disruptions in the circadian rhythms contribute to the pathology of cardiovascular diseases, cancer, metabolic syndromes and aging. A transcription/translation feedback loop (TTFL) forms the core of the molecular circadian clock mechanism. Transcription factors, CLOCK or NPAS2 and BMAL1 or BMAL2, form the positive limb of the feedback loop, act in the form of a heterodimer and activate the transcription of core clock genes and clock-controlled genes (involved in key metabolic processes), harboring E-box elements (5'-CACGTG-3') within their promoters. The core clock genes: PER1/2/3 and CRY1/2 which are transcriptional repressors form the negative limb of the feedback loop and interact with the CLOCK|NPAS2-BMAL1|BMAL2 heterodimer inhibiting its activity and thereby negatively regulating their own expression. This heterodimer also activates nuclear receptors NR1D1/2 and RORA/B/G, which form a second feedback loop and which activate and repress BMAL1 transcription, respectively. CRY1 and CRY2 have redundant functions but also differential and selective contributions at least in defining the pace of the SCN circadian clock and its circadian transcriptional outputs. More potent transcriptional repressor in cerebellum and liver than CRY2, though more effective in lengthening the period of the SCN oscillator. On its side, CRY2 seems to play a critical role in tuning SCN circadian period by opposing the action of CRY1. With CRY2, is dispensable for circadian rhythm generation but necessary for the development of intercellular networks for rhythm synchrony. Capable of translocating circadian clock core proteins such as PER proteins to the nucleus. Interacts with CLOCK-BMAL1 independently of PER proteins and is found at CLOCK-BMAL1-bound sites, suggesting that CRY may act as a molecular gatekeeper to maintain CLOCK-BMAL1 in a poised and repressed state until the proper time for transcriptional activation. Represses the CLOCK-BMAL1 induced transcription of BHLHE40/DEC1, ATF4, MTA1, KLF10 and NAMPT. May repress circadian target genes expression in collaboration with HDAC1 and HDAC2 through histone deacetylation. Mediates the clock-control activation of ATR and modulates ATR-mediated DNA damage checkpoint. In liver, mediates circadian regulation of cAMP signaling and gluconeogenesis by binding to membrane-coupled G proteins and blocking glucagon-mediated increases in intracellular cAMP concentrations and CREB1 phosphorylation. Inhibits hepatic gluconeogenesis by decreasing nuclear FOXO1 levels that down-regulates gluconeogenic gene expression. Besides its role in the maintenance of the circadian clock, is also involved in the regulation of other processes. Represses glucocorticoid receptor NR3C1/GR-induced transcriptional activity by binding to glucocorticoid response elements (GREs). Plays a key role in glucose and lipid metabolism modulation, in part, through the transcriptional regulation of genes involved in these pathways, such as LEP or ACSL4. Represses PPARD and its target genes in the skeletal muscle and limits exercise capacity. Plays an essential role in the generation of circadian rhythms in the retina. Represses the transcriptional activity of NR1I2. The protein is Cryptochrome-1 (Cry1) of Rattus norvegicus (Rat).